The sequence spans 393 residues: Methyltransferase-like protein 22 (393 aa).

Positions 54–87 are disordered; sequence WTDSGAEDSGPTDVSTEEMPPAGSGSGHSHEDLS. Ser120 is subject to Phosphoserine.

This sequence belongs to the methyltransferase superfamily. METTL22 family. Interacts with members of the heat shock protein 90 and 70 families; these proteins probably are methylation substrates.

The protein localises to the nucleus. The catalysed reaction is L-lysyl-[protein] + 3 S-adenosyl-L-methionine = N(6),N(6),N(6)-trimethyl-L-lysyl-[protein] + 3 S-adenosyl-L-homocysteine + 3 H(+). Functionally, protein N-lysine methyltransferase. Trimethylates KIN at Lys-135 (in vitro). This is Methyltransferase-like protein 22 (Mettl22) from Mus musculus (Mouse).